A 257-amino-acid chain; its full sequence is MFKVRVIPCLDVKDGRVVKGVNFVDLRDAGDPVEAAIAYDAAGADELTFLDITATHENRGIMLDVVRRTAEACFMPVTVGGGVREVDDIKTLLRAGADKVSINSAAVSRREFVKEAAEKFGEQCVVVAIDAKRVKRPGGDRWEIFTHGGRNATGIDAIEYAQEVVSLGAGEILLTSMDRDGTRQGFDIPLTRAIADSIPVPVIASGGVGNLDHLVDGIRDGHATAVLAASIFHFGEFTVREAKEHMARRGLPMRLDA.

Catalysis depends on residues aspartate 11 and aspartate 130.

This sequence belongs to the HisA/HisF family. As to quaternary structure, heterodimer of HisH and HisF.

It localises to the cytoplasm. The catalysed reaction is 5-[(5-phospho-1-deoxy-D-ribulos-1-ylimino)methylamino]-1-(5-phospho-beta-D-ribosyl)imidazole-4-carboxamide + L-glutamine = D-erythro-1-(imidazol-4-yl)glycerol 3-phosphate + 5-amino-1-(5-phospho-beta-D-ribosyl)imidazole-4-carboxamide + L-glutamate + H(+). Its pathway is amino-acid biosynthesis; L-histidine biosynthesis; L-histidine from 5-phospho-alpha-D-ribose 1-diphosphate: step 5/9. In terms of biological role, IGPS catalyzes the conversion of PRFAR and glutamine to IGP, AICAR and glutamate. The HisF subunit catalyzes the cyclization activity that produces IGP and AICAR from PRFAR using the ammonia provided by the HisH subunit. This is Imidazole glycerol phosphate synthase subunit HisF from Bradyrhizobium diazoefficiens (strain JCM 10833 / BCRC 13528 / IAM 13628 / NBRC 14792 / USDA 110).